The primary structure comprises 144 residues: Bacilliredoxin BCE33L1972 (144 aa).

Belongs to the bacilliredoxin family.

This chain is Bacilliredoxin BCE33L1972, found in Bacillus cereus (strain ZK / E33L).